A 420-amino-acid chain; its full sequence is 3-phosphoshikimate 1-carboxyvinyltransferase (420 aa).

Positions 26, 27, and 31 each coordinate 3-phosphoshikimate. Phosphoenolpyruvate is bound at residue Lys26. Phosphoenolpyruvate-binding residues include Gly97 and Arg125. 3-phosphoshikimate-binding residues include Ser170, Ser171, Gln172, Asp297, Asn320, and Lys324. Gln172 is a binding site for phosphoenolpyruvate. Asp297 (proton acceptor) is an active-site residue. Phosphoenolpyruvate-binding residues include Arg328, Arg375, and Lys400.

It belongs to the EPSP synthase family. As to quaternary structure, monomer.

Its subcellular location is the cytoplasm. It carries out the reaction 3-phosphoshikimate + phosphoenolpyruvate = 5-O-(1-carboxyvinyl)-3-phosphoshikimate + phosphate. The protein operates within metabolic intermediate biosynthesis; chorismate biosynthesis; chorismate from D-erythrose 4-phosphate and phosphoenolpyruvate: step 6/7. In terms of biological role, catalyzes the transfer of the enolpyruvyl moiety of phosphoenolpyruvate (PEP) to the 5-hydroxyl of shikimate-3-phosphate (S3P) to produce enolpyruvyl shikimate-3-phosphate and inorganic phosphate. The chain is 3-phosphoshikimate 1-carboxyvinyltransferase from Rhizobium leguminosarum bv. trifolii (strain WSM2304).